Here is a 274-residue protein sequence, read N- to C-terminus: Thiamine kinase (274 aa).

This sequence belongs to the thiamine kinase family.

It carries out the reaction thiamine + ATP = thiamine phosphate + ADP + H(+). The protein operates within cofactor biosynthesis; thiamine diphosphate biosynthesis; thiamine phosphate from thiamine: step 1/1. Functionally, catalyzes the ATP-dependent phosphorylation of thiamine to thiamine phosphate. Is involved in thiamine salvage. This is Thiamine kinase from Escherichia coli O17:K52:H18 (strain UMN026 / ExPEC).